Reading from the N-terminus, the 399-residue chain is MKDRVVLAYSGGLDTTVAISWIAKERNAEVIAVSIDLGQGGEDMETVRQRALGAGAVESIVVDARDEFANDYCLPTIKANGLYMKEYPLVSAISRPLIVKHMAEAAKEHNGTAVAHGCTGKGNDQVRFEVGFANTAPELEIIAPARDYAWTRDKAIAFAEENNIPIEQSKSSPFSIDQNVWGRAVETGYLEDLWNAPTKDVYAYTEDPALGQAPDEVIISFESGVPVAIDGRKVTVLEAIEELNRRAGAQGVGRLDMVEDRLVGIKSREIYEAPGAMTLIRAHEAMEAVTIERELARYKRGIDAEWSDLVYDGLWFSPLKRSLDAFIEESQEHVTGDIRLVLHAGNIIINGRRSDHSLYDFNLATYDEGDSFDQSLAKGFVELHGLSSKIAAKRDMGIL.

An ATP-binding site is contributed by 8-16 (AYSGGLDTT). L-citrulline is bound at residue Y87. An ATP-binding site is contributed by G117. 3 residues coordinate L-aspartate: T119, N123, and D124. N123 contributes to the L-citrulline binding site. R127, S175, E259, and Y271 together coordinate L-citrulline.

The protein belongs to the argininosuccinate synthase family. Type 1 subfamily. In terms of assembly, homotetramer.

Its subcellular location is the cytoplasm. It carries out the reaction L-citrulline + L-aspartate + ATP = 2-(N(omega)-L-arginino)succinate + AMP + diphosphate + H(+). It functions in the pathway amino-acid biosynthesis; L-arginine biosynthesis; L-arginine from L-ornithine and carbamoyl phosphate: step 2/3. The sequence is that of Argininosuccinate synthase from Corynebacterium urealyticum (strain ATCC 43042 / DSM 7109).